The primary structure comprises 370 residues: Chaperone protein DnaJ (370 aa).

Positions 4 to 68 (DYYQVLGVSK…QKRAAYDRFG (65 aa)) constitute a J domain. The CR-type zinc finger occupies 133 to 211 (GIEKNISFSS…CHGMGRYHKQ (79 aa)). Residues Cys-146, Cys-149, Cys-163, Cys-166, Cys-185, Cys-188, Cys-199, and Cys-202 each contribute to the Zn(2+) site. CXXCXGXG motif repeat units lie at residues 146 to 153 (CDTCHGTG), 163 to 170 (CDACGGVG), 185 to 192 (CHKCQGNG), and 199 to 206 (CKKCHGMG).

It belongs to the DnaJ family. Homodimer. The cofactor is Zn(2+).

The protein resides in the cytoplasm. Its function is as follows. Participates actively in the response to hyperosmotic and heat shock by preventing the aggregation of stress-denatured proteins and by disaggregating proteins, also in an autonomous, DnaK-independent fashion. Unfolded proteins bind initially to DnaJ; upon interaction with the DnaJ-bound protein, DnaK hydrolyzes its bound ATP, resulting in the formation of a stable complex. GrpE releases ADP from DnaK; ATP binding to DnaK triggers the release of the substrate protein, thus completing the reaction cycle. Several rounds of ATP-dependent interactions between DnaJ, DnaK and GrpE are required for fully efficient folding. Also involved, together with DnaK and GrpE, in the DNA replication of plasmids through activation of initiation proteins. The protein is Chaperone protein DnaJ of Rickettsia prowazekii (strain Madrid E).